A 70-amino-acid polypeptide reads, in one-letter code: Large ribosomal subunit protein eL38 (70 aa).

Lys-4 participates in a covalent cross-link: Glycyl lysine isopeptide (Lys-Gly) (interchain with G-Cter in SUMO2). At Lys-9 the chain carries N6-acetyllysine; alternate. Lys-9 is covalently cross-linked (Glycyl lysine isopeptide (Lys-Gly) (interchain with G-Cter in SUMO2); alternate). Position 67 is an N6-acetyllysine (Lys-67).

It belongs to the eukaryotic ribosomal protein eL38 family. Component of the large ribosomal subunit.

The protein localises to the cytoplasm. Component of the large ribosomal subunit. The ribosome is a large ribonucleoprotein complex responsible for the synthesis of proteins in the cell. The sequence is that of Large ribosomal subunit protein eL38 (RPL38) from Macaca fascicularis (Crab-eating macaque).